We begin with the raw amino-acid sequence, 346 residues long: Golgi to ER traffic protein 4 (346 aa).

The disordered stretch occupies residues 317-346 (GQNQGGSRRTPQGRSQSKTVEAPPASMELD). Residues 321–335 (GGSRRTPQGRSQSKT) show a composition bias toward polar residues.

The protein belongs to the GET4 family. As to quaternary structure, component of the get4/get5/sgt2 sorting complex.

It localises to the cytoplasm. Component of the get4/get5/sgt2 sorting complex involved in the GET (guided entry of TA proteins) pathway that leads to the insertion of tail-anchored (TA) proteins into the endoplasmic reticulum. Get4 and get5 form an obligate complex that catalyzes the transfer of tail-anchored proteins destined to the endoplasmic reticulum from sgt2 to the cytosolic targeting factor which then targets the TA protein to the ER membrane via get1/get2. The chain is Golgi to ER traffic protein 4 from Aspergillus fumigatus (strain ATCC MYA-4609 / CBS 101355 / FGSC A1100 / Af293) (Neosartorya fumigata).